Reading from the N-terminus, the 417-residue chain is MKFTELTVKEFENFVQNPSLESHYFQVKENIAIRESDGFQVVLLGVKDDDNRVIAASLFSKIPTMGSYVYYSNRGPVMDYSDLGLVDFYLKELDKYLHQHQCLYVKLDPYWLYQVYDKDINPLTEKNDALVNLFKSHGYDHHGFTTQYDSSSQVRWMGVLDLEGKTPASLRKEFDSQRKRNINKAINYGVKVRFLSKDEFDLFLDLYRETEARTGFASKTDDYFYNFIEHYGDKVLVPLAYIDLNEYIQHLQESLNDKENRRDDMMAKENKTDKQLKKIAELDKQIDHDKKELLQASELRQTDGEILNLASGVYFANAYEVNYFSGGSSEKYNQYMGPYAMHWHMINYCFDNGYDRYNFYGLSGDFTENSEDYGVYRFKRGFNVRIEELIGDFYKPINKVKYWLFNTLDRIRNKLKK.

It belongs to the FemABX family.

The protein resides in the cytoplasm. The catalysed reaction is MurNAc-L-Ala-D-isoglutaminyl-L-Lys-(N(6)-tri-Gly)-D-Ala-D-Ala-diphospho-di-trans,octa-cis-undecaprenyl-GlcNAc + 2 glycyl-tRNA(Gly) = MurNAc-L-Ala-D-isoglutaminyl-L-Lys-(N(6)-penta-Gly)-D-Ala-D-Ala-diphospho-di-trans,octa-cis-undecaprenyl-GlcNAc + 2 tRNA(Gly) + 2 H(+). Its function is as follows. Catalyzes the incorporation of amino acid(s) into the interchain peptide bridge of peptidoglycan, using aminoacyl-tRNA as amino acid donor. The protein is Aminoacyltransferase FemB (femB) of Staphylococcus epidermidis (strain ATCC 12228 / FDA PCI 1200).